We begin with the raw amino-acid sequence, 178 residues long: Large ribosomal subunit protein uL6 (178 aa).

This sequence belongs to the universal ribosomal protein uL6 family. Part of the 50S ribosomal subunit.

This protein binds to the 23S rRNA, and is important in its secondary structure. It is located near the subunit interface in the base of the L7/L12 stalk, and near the tRNA binding site of the peptidyltransferase center. In Francisella tularensis subsp. mediasiatica (strain FSC147), this protein is Large ribosomal subunit protein uL6.